Here is a 125-residue protein sequence, read N- to C-terminus: Holo-[acyl-carrier-protein] synthase (125 aa).

Residues aspartate 8 and glutamate 57 each coordinate Mg(2+).

The protein belongs to the P-Pant transferase superfamily. AcpS family. Mg(2+) serves as cofactor.

The protein resides in the cytoplasm. The catalysed reaction is apo-[ACP] + CoA = holo-[ACP] + adenosine 3',5'-bisphosphate + H(+). Its function is as follows. Transfers the 4'-phosphopantetheine moiety from coenzyme A to a Ser of acyl-carrier-protein. This is Holo-[acyl-carrier-protein] synthase from Nitrosomonas europaea (strain ATCC 19718 / CIP 103999 / KCTC 2705 / NBRC 14298).